Here is a 156-residue protein sequence, read N- to C-terminus: Small ribosomal subunit protein uS7c (156 aa).

Belongs to the universal ribosomal protein uS7 family. As to quaternary structure, part of the 30S ribosomal subunit.

It is found in the plastid. Its subcellular location is the chloroplast. Its function is as follows. One of the primary rRNA binding proteins, it binds directly to 16S rRNA where it nucleates assembly of the head domain of the 30S subunit. The polypeptide is Small ribosomal subunit protein uS7c (rps7) (Chara vulgaris (Common stonewort)).